Consider the following 994-residue polypeptide: Valine--tRNA ligase (994 aa).

The short motif at 43–53 is the 'HIGH' region element; the sequence is PNVTGTLHMGH. The segment covering 329–345 has biased composition (polar residues); that stretch reads QSGMPSGATSDTTNTPS. Residues 329 to 355 form a disordered region; it reads QSGMPSGATSDTTNTPSDPEASSAANQ. A 'KMSKS' region motif is present at residues 585–589; it reads KMSKS. Lysine 588 is an ATP binding site. The tract at residues 692-714 is disordered; the sequence is AHSPAQHQAGQDGQDAPRTPQPR. Over residues 696 to 707 the composition is skewed to low complexity; that stretch reads AQHQAGQDGQDA. Positions 928-994 form a coiled coil; it reads LIDVDAERVR…NGLRERRATL (67 aa).

This sequence belongs to the class-I aminoacyl-tRNA synthetase family. ValS type 1 subfamily. As to quaternary structure, monomer.

It is found in the cytoplasm. The enzyme catalyses tRNA(Val) + L-valine + ATP = L-valyl-tRNA(Val) + AMP + diphosphate. Catalyzes the attachment of valine to tRNA(Val). As ValRS can inadvertently accommodate and process structurally similar amino acids such as threonine, to avoid such errors, it has a 'posttransfer' editing activity that hydrolyzes mischarged Thr-tRNA(Val) in a tRNA-dependent manner. This is Valine--tRNA ligase from Xylella fastidiosa (strain 9a5c).